A 272-amino-acid polypeptide reads, in one-letter code: Probable nitrilase C965.09 (272 aa).

In terms of domain architecture, CN hydrolase spans 3 to 244; that stretch reads ANIACVQMAP…EGVISYTVDL (242 aa). Catalysis depends on E45, which acts as the Proton acceptor. K118 serves as the catalytic Proton donor. The active-site Nucleophile is C150.

This sequence belongs to the carbon-nitrogen hydrolase superfamily.

Its subcellular location is the cytoplasm. It is found in the nucleus. In Schizosaccharomyces pombe (strain 972 / ATCC 24843) (Fission yeast), this protein is Probable nitrilase C965.09.